We begin with the raw amino-acid sequence, 90 residues long: Small ribosomal subunit protein bS16 (90 aa).

Belongs to the bacterial ribosomal protein bS16 family.

The sequence is that of Small ribosomal subunit protein bS16 from Lactobacillus acidophilus (strain ATCC 700396 / NCK56 / N2 / NCFM).